Reading from the N-terminus, the 445-residue chain is 23S rRNA (uracil(1939)-C(5))-methyltransferase RlmD (445 aa).

The TRAM domain occupies 12–70 (SKQLSSKLSLNVTQLDHLGAGIAHHQGKIVFINGALPGETVQVQLTEQKKKFSRAKLLK). 4 residues coordinate [4Fe-4S] cluster: Cys-83, Cys-89, Cys-92, and Cys-171. Residues Gln-278, Phe-307, Asn-312, Glu-328, Asp-355, and Asp-375 each coordinate S-adenosyl-L-methionine. The active-site Nucleophile is Cys-401.

The protein belongs to the class I-like SAM-binding methyltransferase superfamily. RNA M5U methyltransferase family. RlmD subfamily.

It carries out the reaction uridine(1939) in 23S rRNA + S-adenosyl-L-methionine = 5-methyluridine(1939) in 23S rRNA + S-adenosyl-L-homocysteine + H(+). In terms of biological role, catalyzes the formation of 5-methyl-uridine at position 1939 (m5U1939) in 23S rRNA. This Shewanella piezotolerans (strain WP3 / JCM 13877) protein is 23S rRNA (uracil(1939)-C(5))-methyltransferase RlmD.